A 135-amino-acid polypeptide reads, in one-letter code: Large ribosomal subunit protein bL19 (135 aa).

Belongs to the bacterial ribosomal protein bL19 family.

Its function is as follows. This protein is located at the 30S-50S ribosomal subunit interface and may play a role in the structure and function of the aminoacyl-tRNA binding site. In Protochlamydia amoebophila (strain UWE25), this protein is Large ribosomal subunit protein bL19.